A 131-amino-acid polypeptide reads, in one-letter code: Small ribosomal subunit protein bS6 (131 aa).

The interval Asp94–Asp131 is disordered. The segment covering Arg117 to Asp131 has biased composition (basic and acidic residues).

This sequence belongs to the bacterial ribosomal protein bS6 family.

Its function is as follows. Binds together with bS18 to 16S ribosomal RNA. The sequence is that of Small ribosomal subunit protein bS6 from Psychrobacter cryohalolentis (strain ATCC BAA-1226 / DSM 17306 / VKM B-2378 / K5).